Here is a 166-residue protein sequence, read N- to C-terminus: Putative 4-hydroxy-4-methyl-2-oxoglutarate aldolase (166 aa).

Substrate contacts are provided by residues 74–77 (GDQI) and arginine 96. Residue aspartate 97 coordinates a divalent metal cation.

It belongs to the class II aldolase/RraA-like family. In terms of assembly, homotrimer. It depends on a divalent metal cation as a cofactor.

The catalysed reaction is 4-hydroxy-4-methyl-2-oxoglutarate = 2 pyruvate. It carries out the reaction oxaloacetate + H(+) = pyruvate + CO2. Its function is as follows. Catalyzes the aldol cleavage of 4-hydroxy-4-methyl-2-oxoglutarate (HMG) into 2 molecules of pyruvate. Also contains a secondary oxaloacetate (OAA) decarboxylase activity due to the common pyruvate enolate transition state formed following C-C bond cleavage in the retro-aldol and decarboxylation reactions. This Xanthomonas campestris pv. campestris (strain 8004) protein is Putative 4-hydroxy-4-methyl-2-oxoglutarate aldolase.